A 180-amino-acid chain; its full sequence is Large ribosomal subunit protein uL5 (180 aa).

This sequence belongs to the universal ribosomal protein uL5 family. In terms of assembly, part of the 50S ribosomal subunit; part of the 5S rRNA/L5/L18/L25 subcomplex. Contacts the 5S rRNA and the P site tRNA. Forms a bridge to the 30S subunit in the 70S ribosome.

Functionally, this is one of the proteins that bind and probably mediate the attachment of the 5S RNA into the large ribosomal subunit, where it forms part of the central protuberance. In the 70S ribosome it contacts protein S13 of the 30S subunit (bridge B1b), connecting the 2 subunits; this bridge is implicated in subunit movement. Contacts the P site tRNA; the 5S rRNA and some of its associated proteins might help stabilize positioning of ribosome-bound tRNAs. The polypeptide is Large ribosomal subunit protein uL5 (Ralstonia nicotianae (strain ATCC BAA-1114 / GMI1000) (Ralstonia solanacearum)).